The sequence spans 510 residues: Serine/threonine-protein kinase RIO3 (510 aa).

2 disordered regions span residues 100 to 126 (GSSS…ENED) and 143 to 191 (DEEN…DMVG). 2 stretches are compositionally biased toward basic and acidic residues: residues 108 to 118 (TPDRYHPKTMQ) and 162 to 179 (TKHD…KTFN). Residues 235–510 (LLLLKWINQG…RGISPAREYN (276 aa)) enclose the Protein kinase domain. ATP contacts are provided by residues 241-249 (INQGVFDSV) and lysine 275. Aspartate 388 (proton acceptor) is an active-site residue. The segment covering 474–499 (RSVDLRHDKSRPADMELKKYNEEKKA) has biased composition (basic and acidic residues). The tract at residues 474–510 (RSVDLRHDKSRPADMELKKYNEEKKANRGISPAREYN) is disordered.

The protein belongs to the protein kinase superfamily. RIO-type Ser/Thr kinase family. The cofactor is Mg(2+). As to expression, expressed in tail neurons (PVQ and PHAL/PQR).

The enzyme catalyses L-seryl-[protein] + ATP = O-phospho-L-seryl-[protein] + ADP + H(+). It carries out the reaction L-threonyl-[protein] + ATP = O-phospho-L-threonyl-[protein] + ADP + H(+). This chain is Serine/threonine-protein kinase RIO3 (riok-3), found in Caenorhabditis elegans.